Here is a 181-residue protein sequence, read N- to C-terminus: Ribulose bisphosphate carboxylase small subunit, chloroplastic 2 (181 aa).

A chloroplast-targeting transit peptide spans 1–57 (MAFLIMSSAAAVATGTNAAQASMIAPFTGLKSATSFPVSRKQNLDITSIASNGGRVQ).

The protein belongs to the RuBisCO small chain family. Heterohexadecamer of 8 large and 8 small subunits.

It localises to the plastid. The protein localises to the chloroplast. Its function is as follows. RuBisCO catalyzes two reactions: the carboxylation of D-ribulose 1,5-bisphosphate, the primary event in carbon dioxide fixation, as well as the oxidative fragmentation of the pentose substrate. Both reactions occur simultaneously and in competition at the same active site. Although the small subunit is not catalytic it is essential for maximal activity. The protein is Ribulose bisphosphate carboxylase small subunit, chloroplastic 2 of Nicotiana sylvestris (Wood tobacco).